A 559-amino-acid polypeptide reads, in one-letter code: Nuclear speckle splicing regulatory protein 1 (559 aa).

Residues 22–57 (VLQKPSVFGNDSDDDDDETSVSESLQREAAKKQAMK) form a disordered region. Residues serine 27 and serine 33 each carry the phosphoserine modification. The segment covering 32–41 (DSDDDDDETS) has biased composition (acidic residues). Residues 105–179 (IHNLLKAVEI…EARLDVTKQR (75 aa)) adopt a coiled-coil conformation. Positions 107–171 (NLLKAVEIRK…RERRAAALEA (65 aa)) are necessary for alternative splicing activity. A disordered region spans residues 195-534 (EEEVPTCSFR…AKRSNEETVT (340 aa)). Basic and acidic residues predominate over residues 204–219 (REARSEIKEEKSKGYS). Residue lysine 211 forms a Glycyl lysine isopeptide (Lys-Gly) (interchain with G-Cter in SUMO2) linkage. Serine 249, serine 255, and serine 256 each carry phosphoserine. Positions 251–274 (FDAKSSENDEMEGDKGNCRREKGT) are enriched in basic and acidic residues. Threonine 276 bears the Phosphothreonine mark. Lysine 282 participates in a covalent cross-link: Glycyl lysine isopeptide (Lys-Gly) (interchain with G-Cter in SUMO2). Basic and acidic residues-rich tracts occupy residues 314 to 343 (EKRE…EKRD), 351 to 488 (SHRD…RNPE), and 502 to 521 (RITE…HETV). A coiled-coil region spans residues 379-428 (KREKDREKYPSREQERHRQRNNYDRHNEKGCEKEEKSKEKEEHVKARKER). Serine 458 carries the post-translational modification Phosphoserine.

Belongs to the NSRP1 family. In terms of assembly, interacts (via C-terminus) with SRSF1. Interacts (via C-terminus) with SRSF2.

It is found in the nucleus. The protein localises to the nucleus speckle. In terms of biological role, RNA-binding protein that mediates pre-mRNA alternative splicing regulation. In Bos taurus (Bovine), this protein is Nuclear speckle splicing regulatory protein 1 (NSRP1).